A 466-amino-acid chain; its full sequence is Dihydrolipoyl dehydrogenase (466 aa).

Residues 34–42 (ERVHLGGIC), Lys51, and Gly114 contribute to the FAD site. Cys42 and Cys47 are disulfide-bonded. Residues 180-184 (GSGAI), Glu203, and 269-272 (AIGV) contribute to the NAD(+) site. The FAD site is built by Asp311 and Ala319. The active-site Proton acceptor is the His445.

The protein belongs to the class-I pyridine nucleotide-disulfide oxidoreductase family. Homodimer. The cofactor is FAD.

The protein localises to the cytoplasm. It carries out the reaction N(6)-[(R)-dihydrolipoyl]-L-lysyl-[protein] + NAD(+) = N(6)-[(R)-lipoyl]-L-lysyl-[protein] + NADH + H(+). In terms of biological role, lipoamide dehydrogenase is a component of the alpha-ketoacid dehydrogenase complexes. The sequence is that of Dihydrolipoyl dehydrogenase (lpd) from Zymomonas mobilis subsp. mobilis (strain ATCC 31821 / ZM4 / CP4).